A 337-amino-acid polypeptide reads, in one-letter code: Equatorin (337 aa).

Positions 1–20 (MDFILLIILSGVFLPDIISL) are cleaved as a signal peptide. Residues 21 to 183 (QPIVGQEPGV…LSELEEIKLK (163 aa)) lie on the Lumenal side of the membrane. The tract at residues 110-130 (SKPTASGEEEKPSESSRKTST) is disordered. Residues 117-126 (EEEKPSESSR) show a composition bias toward basic and acidic residues. Asn-145 carries N-linked (GlcNAc...) asparagine glycosylation. A helical transmembrane segment spans residues 184 to 204 (LMLGISLMTLVLLIPLLIFCF). Over 205–337 (ATLYKLRHLR…LLNKEGSPSN (133 aa)) the chain is Cytoplasmic. The interval 259–283 (SSEMRRSRTRRSKSKPMDFSAGSNQ) is disordered. Ser-336 bears the Phosphoserine mark.

As to quaternary structure, interacts with SNAP25. Post-translationally, highly N- and O-glycosylated; contains sialic acid. MN9 epitope is O-glycosylated. Sperm specific, including germ cells (at protein level).

The protein resides in the cytoplasmic vesicle. It localises to the secretory vesicle. Its subcellular location is the acrosome membrane. It is found in the acrosome inner membrane. The protein localises to the acrosome outer membrane. The protein resides in the nucleus. It localises to the cytoplasm. Acrosomal membrane-anchored protein involved in the process of fertilization and in acrosome biogenesis. The chain is Equatorin (Eqtn) from Mus musculus (Mouse).